The chain runs to 359 residues: Protein-glutamate methylesterase/protein-glutamine glutaminase 2 (359 aa).

The 118-residue stretch at 6–123 (KVMIVDDSAL…KSFLEDASND (118 aa)) folds into the Response regulatory domain. At Asp-57 the chain carries 4-aspartylphosphate. Positions 167–359 (ERTTDQLVAI…GAIVGYGKSC (193 aa)) constitute a CheB-type methylesterase domain. Active-site residues include Ser-179, His-205, and Asp-301.

It belongs to the CheB family. Phosphorylated by CheA. Phosphorylation of the N-terminal regulatory domain activates the methylesterase activity.

The protein localises to the cytoplasm. The catalysed reaction is [protein]-L-glutamate 5-O-methyl ester + H2O = L-glutamyl-[protein] + methanol + H(+). It catalyses the reaction L-glutaminyl-[protein] + H2O = L-glutamyl-[protein] + NH4(+). Involved in chemotaxis. Part of a chemotaxis signal transduction system that modulates chemotaxis in response to various stimuli. Catalyzes the demethylation of specific methylglutamate residues introduced into the chemoreceptors (methyl-accepting chemotaxis proteins or MCP) by CheR. Also mediates the irreversible deamidation of specific glutamine residues to glutamic acid. The sequence is that of Protein-glutamate methylesterase/protein-glutamine glutaminase 2 from Dechloromonas aromatica (strain RCB).